Here is a 143-residue protein sequence, read N- to C-terminus: Chorion class A protein Ld5 (143 aa).

The signal sequence occupies residues 1-21; sequence MNSFALLLVCIQACLVQSVFS.

This sequence belongs to the chorion protein family.

This protein is one of many from the eggshell of the gypsy moth. This chain is Chorion class A protein Ld5, found in Lymantria dispar (Gypsy moth).